A 322-amino-acid polypeptide reads, in one-letter code: Ribosomal RNA small subunit methyltransferase H (322 aa).

Residues 34–36 (GGH), D59, F86, D112, and Q119 each bind S-adenosyl-L-methionine.

This sequence belongs to the methyltransferase superfamily. RsmH family.

Its subcellular location is the cytoplasm. It catalyses the reaction cytidine(1402) in 16S rRNA + S-adenosyl-L-methionine = N(4)-methylcytidine(1402) in 16S rRNA + S-adenosyl-L-homocysteine + H(+). Its function is as follows. Specifically methylates the N4 position of cytidine in position 1402 (C1402) of 16S rRNA. This Chlorobium limicola (strain DSM 245 / NBRC 103803 / 6330) protein is Ribosomal RNA small subunit methyltransferase H.